Reading from the N-terminus, the 267-residue chain is Malonyl-[acyl-carrier protein] O-methyltransferase (267 aa).

Belongs to the methyltransferase superfamily.

The catalysed reaction is malonyl-[ACP] + S-adenosyl-L-methionine = malonyl-[ACP] methyl ester + S-adenosyl-L-homocysteine. The protein operates within cofactor biosynthesis; biotin biosynthesis. Functionally, converts the free carboxyl group of a malonyl-thioester to its methyl ester by transfer of a methyl group from S-adenosyl-L-methionine (SAM). It allows to synthesize pimeloyl-ACP via the fatty acid synthetic pathway. This is Malonyl-[acyl-carrier protein] O-methyltransferase from Geobacter sulfurreducens (strain ATCC 51573 / DSM 12127 / PCA).